The sequence spans 444 residues: MKVLLIGGGAREHAIAMALKKNELVELYTLMKNKNPGIYALSEEVSFNSETDVPAIKEFAEKIKPEIAVIGPESPLGVGAADLLEEMGIPTVGPKKLPAQIETSKEFMRNLFKKYEIDGSLKYAAFNEYGNEIESFIDEMTSLGKDVVVKPAGLTGGKGVKVVGEQLKDNDEAKIYAKEVFDKSIGGGKIIIEEKLVGVEFTLHGFVDGENITFMPAVQDHPHAYNNDEGPITGGMGSYSCPNHGLPFISEDMLDRAEKIMEKTVNSINLEVGPYKGFLYGQFMLTADGPKIIEYNARFGDPEAMNLLPILKTDFLDVCFAIAEGKLDKMNIEFENKATVCKYVVPNGYPIDPVKNKELAVAEKAIEDAGAILFYASINEENGKLYITGSRSAAVVGISENIEEAEKIAQKAIENFKGEVYYRSDIGTLDLIKKRIERVKKLAK.

Residues 109-324 form the ATP-grasp domain; that stretch reads RNLFKKYEID…FLDVCFAIAE (216 aa). Position 140-202 (140-202) interacts with ATP; it reads MTSLGKDVVV…EEKLVGVEFT (63 aa). Residues Gln-282, Glu-294, and Asn-296 each coordinate Mg(2+). The Mn(2+) site is built by Gln-282, Glu-294, and Asn-296.

This sequence belongs to the GARS family. Requires Mg(2+) as cofactor. The cofactor is Mn(2+).

The catalysed reaction is 5-phospho-beta-D-ribosylamine + glycine + ATP = N(1)-(5-phospho-beta-D-ribosyl)glycinamide + ADP + phosphate + H(+). It participates in purine metabolism; IMP biosynthesis via de novo pathway; N(1)-(5-phospho-D-ribosyl)glycinamide from 5-phospho-alpha-D-ribose 1-diphosphate: step 2/2. The polypeptide is Phosphoribosylamine--glycine ligase (Methanococcus maripaludis (strain C7 / ATCC BAA-1331)).